A 1398-amino-acid polypeptide reads, in one-letter code: MAP-homologous protein 1 (1398 aa).

At M1 the chain carries N-acetylmethionine. The tract at residues 21–77 is disordered; the sequence is GWLVRPSASTSKSSRPGKSESKANSVAPDIQMDTARPPVFETSVDSSSSILSSNDKG. Residues 27 to 36 are compositionally biased toward polar residues; that stretch reads SASTSKSSRP. Over residues 63–73 the composition is skewed to low complexity; the sequence is SVDSSSSILSS. S81 is subject to Phosphoserine. Disordered stretches follow at residues 90–144, 156–186, and 191–210; these read NQRA…APAP, HRKK…GAAI, and TATI…PPSY. Composition is skewed to polar residues over residues 91–102 and 114–123; these read QRANAGSTSVPT and VVETNLSNVE. The segment covering 159 to 186 has biased composition (basic and acidic residues); that stretch reads KDQEQQEKERERKERSPSPTHVDRGAAI. K221 is covalently cross-linked (Glycyl lysine isopeptide (Lys-Gly) (interchain with G-Cter in ubiquitin)). T222 is subject to Phosphothreonine. Disordered stretches follow at residues 244 to 270, 296 to 382, 395 to 428, and 515 to 548; these read HSPE…PDPR, SSAS…PSSH, GNNN…SSME, and NPEE…NNSQ. A phosphoserine mark is found at S309, S311, S354, and S357. The span at 357–371 shows a compositional bias: low complexity; it reads SIVDTVDSNSDVSSS. The span at 372-381 shows a compositional bias: polar residues; the sequence is AQNNNQTPSS. Positions 396 to 426 are enriched in low complexity; sequence NNNNNSTNASSLSANVNNPDTSSTSLWSSSS. Residues 521–538 show a composition bias toward basic and acidic residues; the sequence is ANAKSKEEMAPQKQNEVE. T577 is modified (phosphothreonine). Positions 605 to 615 are enriched in low complexity; that stretch reads STSSLASMVSS. Disordered regions lie at residues 605-630, 1148-1169, and 1203-1223; these read STSS…EILP, LKSP…PNSE, and DAED…HEDV. The segment covering 1160–1169 has biased composition (polar residues); the sequence is GGNQAQPNSE. Residues 1208-1223 show a composition bias toward basic and acidic residues; sequence VEFREGDDSNVNHEDV. Residues 1227 to 1258 form a tau/MAP repeat-like region; that stretch reads DQQFRDEVDIKNKYSIIKRELEHEKLVGGGDL. The interval 1313–1372 is disordered; the sequence is QEETAFRTKDEQQSSQSNDSSANASPTTDPISTGSNTSRTNDNAHIPPTDAPGFDKFMNN. The span at 1325-1337 shows a compositional bias: low complexity; it reads QSSQSNDSSANAS. The span at 1338–1355 shows a compositional bias: polar residues; that stretch reads PTTDPISTGSNTSRTNDN.

The protein resides in the cytoplasm. Its subcellular location is the cytoskeleton. It localises to the spindle. Its function is as follows. Essential for the formation and/or stabilization of microtubules. Binds to microtubules in vitro. The protein is MAP-homologous protein 1 (MHP1) of Saccharomyces cerevisiae (strain ATCC 204508 / S288c) (Baker's yeast).